We begin with the raw amino-acid sequence, 1771 residues long: Fatty acid synthase alpha subunit pkiB (1771 aa).

Residues 108–130 are compositionally biased toward polar residues; sequence SQPTQPQFEPTSPSHLTKRSPSP. A disordered region spans residues 108-133; that stretch reads SQPTQPQFEPTSPSHLTKRSPSPSKA. The 79-residue stretch at 143–221 folds into the Carrier domain; sequence ELTLQAGHVI…ESFQPEFSGI (79 aa). O-(pantetheine 4'-phosphoryl)serine is present on Ser-181. The tract at residues 575–771 is beta-ketoacyl reductase; the sequence is HKAVLVTGAG…CGAVIGWTRG (197 aa). The region spanning 1011–1531 is the Ketosynthase family 3 (KS3) domain; it reads KELLHEVAVE…QKGAINIMVS (521 aa). Residues Cys-1197, His-1416, and His-1457 each act as for beta-ketoacyl synthase activity in the active site. Residues Asp-1650, Val-1651, and Glu-1652 each contribute to the Mg(2+) site. Acetyl-CoA-binding positions include 1650–1652, Tyr-1676, Ser-1686, 1695–1705, 1719–1722, and 1753–1755; these read DVE, EAAFKSLQTTS, EVGG, and ISH. Mg(2+) contacts are provided by Ser-1754 and His-1755.

Belongs to the thiolase-like superfamily. Fungal fatty acid synthetase subunit alpha family. As to quaternary structure, [Alpha(6)beta(6)] hexamers of two multifunctional subunits (alpha and beta).

It catalyses the reaction acetyl-CoA + n malonyl-CoA + 2n NADPH + 4n H(+) = a long-chain-acyl-CoA + n CoA + n CO2 + 2n NADP(+).. The catalysed reaction is a fatty acyl-[ACP] + malonyl-[ACP] + H(+) = a 3-oxoacyl-[ACP] + holo-[ACP] + CO2. It carries out the reaction a (3R)-hydroxyacyl-[ACP] + NADP(+) = a 3-oxoacyl-[ACP] + NADPH + H(+). The protein operates within secondary metabolite biosynthesis. Its function is as follows. Fatty acid synthase alpha subunit; part of the pki gene cluster that mediates the biosynthesis of 2,4-dihydroxy-3-methyl-6-(2-oxoundecyl)benzaldehyde. The first step in the pathway is the generation of the decanoyl starter unit by the FAS composed of subunits pkiB and pkiC, which is then transferred directly from the FAS to the SAT domain of the non-reducing polyketide synthase pkiA. PkiA condenses the decanoyyl starter unit with 4 malonyl-CoA units and performs one methylation step to yield 2,4-dihydroxy-3-methyl-6-(2-oxoundecyl)benzaldehyde. The chain is Fatty acid synthase alpha subunit pkiB from Emericella nidulans (strain FGSC A4 / ATCC 38163 / CBS 112.46 / NRRL 194 / M139) (Aspergillus nidulans).